We begin with the raw amino-acid sequence, 229 residues long: Clathrin light chain B (229 aa).

Positions 1–17 (MADDFGFFSSSESGAPE) are enriched in low complexity. The disordered stretch occupies residues 1 to 82 (MADDFGFFSS…NGDVFQEANG (82 aa)). Residues Ser11 and Ser13 each carry the phosphoserine modification. Polar residues predominate over residues 58–73 (GPTSGAGSEDMGTTVN). The segment at 93–155 (ADRLTQEPES…QVEKNKINNR (63 aa)) is involved in binding clathrin heavy chain. Thr187 is modified (phosphothreonine). Cysteines 199 and 209 form a disulfide. N6-acetyllysine is present on Lys204. Ser217 is modified (phosphoserine).

Belongs to the clathrin light chain family. Clathrin coats are formed from molecules containing 3 heavy chains and 3 light chains. Interacts (via N-terminus) with HIP1. Interacts with HIP1R.

It localises to the cytoplasmic vesicle membrane. It is found in the membrane. Its subcellular location is the coated pit. Its function is as follows. Clathrin is the major protein of the polyhedral coat of coated pits and vesicles. In Homo sapiens (Human), this protein is Clathrin light chain B (CLTB).